A 692-amino-acid polypeptide reads, in one-letter code: Non-hemolytic phospholipase C (692 aa).

A signal peptide (tat-type signal) is located at residues 1-35 (MISKSRRSFIRLAAGTVGATVATSMLPSSIQAALA).

It belongs to the bacterial phospholipase C family. Predicted to be exported by the Tat system. The position of the signal peptide cleavage has not been experimentally proven.

It catalyses the reaction a 1,2-diacyl-sn-glycero-3-phosphocholine + H2O = phosphocholine + a 1,2-diacyl-sn-glycerol + H(+). In terms of biological role, hydrolyzes phosphatidylserine as well as phosphatidylcholine. This Pseudomonas aeruginosa (strain ATCC 15692 / DSM 22644 / CIP 104116 / JCM 14847 / LMG 12228 / 1C / PRS 101 / PAO1) protein is Non-hemolytic phospholipase C (plcN).